We begin with the raw amino-acid sequence, 341 residues long: UDP-glucuronic acid decarboxylase 5 (341 aa).

The interval 1-21 (MASSDKQTSPKPPPSPSPLRN) is disordered. 60 to 85 (DNYFTGSKDNLKKWIGHPRFELIRHD) lines the NAD(+) pocket. Arg-169 is a binding site for substrate. The active-site Proton acceptor is Tyr-172. Position 172-176 (172-176 (YDEGK)) interacts with NAD(+). A substrate-binding site is contributed by Asn-201. Residue Arg-213 coordinates NAD(+). Substrate contacts are provided by residues 214 to 218 (VVSNF), 231 to 238 (QKPGTQTR), and 298 to 302 (DPRQR).

The protein belongs to the NAD(P)-dependent epimerase/dehydratase family. UDP-glucuronic acid decarboxylase subfamily. It depends on NAD(+) as a cofactor.

The protein resides in the cytoplasm. It catalyses the reaction UDP-alpha-D-glucuronate + H(+) = UDP-alpha-D-xylose + CO2. It participates in nucleotide-sugar biosynthesis; UDP-alpha-D-xylose biosynthesis; UDP-alpha-D-xylose from UDP-alpha-D-glucuronate: step 1/1. In terms of biological role, catalyzes the NAD-dependent decarboxylation of UDP-glucuronic acid to UDP-xylose. Necessary for the biosynthesis of the core tetrasaccharide in glycosaminoglycan biosynthesis. The chain is UDP-glucuronic acid decarboxylase 5 (UXS5) from Arabidopsis thaliana (Mouse-ear cress).